Here is a 102-residue protein sequence, read N- to C-terminus: Putative pterin-4-alpha-carbinolamine dehydratase (102 aa).

This sequence belongs to the pterin-4-alpha-carbinolamine dehydratase family.

The enzyme catalyses (4aS,6R)-4a-hydroxy-L-erythro-5,6,7,8-tetrahydrobiopterin = (6R)-L-erythro-6,7-dihydrobiopterin + H2O. In Burkholderia ambifaria (strain MC40-6), this protein is Putative pterin-4-alpha-carbinolamine dehydratase.